Consider the following 366-residue polypeptide: tRNA(Met) cytidine acetate ligase (366 aa).

ATP-binding positions include 7–20 (IAEFNPFHNGHKYL), G96, N152, and R175.

The protein belongs to the TmcAL family.

Its subcellular location is the cytoplasm. It carries out the reaction cytidine(34) in elongator tRNA(Met) + acetate + ATP = N(4)-acetylcytidine(34) in elongator tRNA(Met) + AMP + diphosphate. Catalyzes the formation of N(4)-acetylcytidine (ac(4)C) at the wobble position of elongator tRNA(Met), using acetate and ATP as substrates. First activates an acetate ion to form acetyladenylate (Ac-AMP) and then transfers the acetyl group to tRNA to form ac(4)C34. This chain is tRNA(Met) cytidine acetate ligase, found in Streptococcus mutans serotype c (strain ATCC 700610 / UA159).